Reading from the N-terminus, the 210-residue chain is PEP-dependent dihydroxyacetone kinase, ADP-binding subunit DhaL (210 aa).

Positions 6 to 206 (TQIVNWLTRC…VMFMMQMLAL (201 aa)) constitute a DhaL domain. The Mg(2+) site is built by Asp30, Asp35, and Asp37. ADP-binding positions include 38-41 (HGLN), 79-80 (AS), Gly121, Met130, Arg178, and 191-193 (DPG).

Homodimer. The dihydroxyacetone kinase complex is composed of a homodimer of DhaM, a homodimer of DhaK and the subunit DhaL. DhaL also forms a complex with DhaR. It depends on Mg(2+) as a cofactor.

The protein resides in the cytoplasm. It carries out the reaction dihydroxyacetone + phosphoenolpyruvate = dihydroxyacetone phosphate + pyruvate. It participates in polyol metabolism; glycerol degradation. In terms of biological role, ADP-binding subunit of the dihydroxyacetone kinase, which is responsible for the phosphoenolpyruvate (PEP)-dependent phosphorylation of dihydroxyacetone. DhaL-ADP is converted to DhaL-ATP via a phosphoryl group transfer from DhaM and transmits it to dihydroxyacetone bound to DhaK. DhaL also acts as coactivator of the transcription activator DhaR by binding to the sensor domain of DhaR. In the presence of dihydroxyacetone, DhaL-ADP displaces DhaK and stimulates DhaR activity. In the absence of dihydroxyacetone, DhaL-ADP is converted by the PTS to DhaL-ATP, which does not bind to DhaR. This is PEP-dependent dihydroxyacetone kinase, ADP-binding subunit DhaL from Escherichia coli (strain K12).